A 160-amino-acid chain; its full sequence is Cytochrome c-type biogenesis protein CcmE (160 aa).

The Cytoplasmic segment spans residues 1 to 8 (MNPRRKQR). A helical; Signal-anchor for type II membrane protein membrane pass occupies residues 9 to 29 (LTWVAILVIGVSVATGLMLYA). Residues 30-160 (LSQSIDLFYT…PNTVEKGEGQ (131 aa)) are Periplasmic-facing. His130 and Tyr134 together coordinate heme.

Belongs to the CcmE/CycJ family.

It localises to the cell inner membrane. Functionally, heme chaperone required for the biogenesis of c-type cytochromes. Transiently binds heme delivered by CcmC and transfers the heme to apo-cytochromes in a process facilitated by CcmF and CcmH. The polypeptide is Cytochrome c-type biogenesis protein CcmE (Idiomarina loihiensis (strain ATCC BAA-735 / DSM 15497 / L2-TR)).